Consider the following 231-residue polypeptide: RNA pyrophosphohydrolase (231 aa).

Residues 6-149 enclose the Nudix hydrolase domain; that stretch reads GFRPNVGIIL…KRDVYQLALT (144 aa). Residues 38–59 carry the Nudix box motif; it reads GGIKYGETPEQAMYRELHEEIG. Residues 168–200 form a disordered region; it reads VHHGRHGSGQRYAQQPGQPPTLAQRRPLQPVTQ.

Belongs to the Nudix hydrolase family. RppH subfamily. The cofactor is a divalent metal cation.

Its function is as follows. Accelerates the degradation of transcripts by removing pyrophosphate from the 5'-end of triphosphorylated RNA, leading to a more labile monophosphorylated state that can stimulate subsequent ribonuclease cleavage. This is RNA pyrophosphohydrolase from Cupriavidus pinatubonensis (strain JMP 134 / LMG 1197) (Cupriavidus necator (strain JMP 134)).